Reading from the N-terminus, the 354-residue chain is UPF0324 membrane protein BL1094 (354 aa).

Helical transmembrane passes span 12–33 (IATVDMLFIGVLTLLASLFASW), 43–65 (FGALIIALLIGMIIQFPIRSAYV), 86–108 (LLRLGIILLGFKLNLAVLFTQGI), 112–129 (PIAAVVVTLTIIVCYAIA), 138–160 (LAILTAGGTGICGAAAVMGLAGS), 175–197 (VTMAVAIVAIMGTVFALLEIALG), 239–256 (LSRVLMLVFAAIIIAIWW), 271–293 (VAFPWFMLGFIGASIIGTFVPFV), 300–321 (LVDFAYIVLGMAMAALGINVNF), and 331–353 (PMLASFLTSILLMCFAAGVAMLF).

Belongs to the UPF0324 family.

The protein localises to the cell membrane. This chain is UPF0324 membrane protein BL1094, found in Bifidobacterium longum (strain NCC 2705).